Here is a 73-residue protein sequence, read N- to C-terminus: Protein WFDC10B (73 aa).

Residues 1–21 (MAPQTLLLVLVLCVLLLQAQG) form the signal peptide. A WAP domain is found at 28–73 (RMQRIKVCEKRPSIDLCIHHCSYFQKCETNKICCSAFCGNICMSIL).

As to expression, ubiquitously expressed.

The protein resides in the secreted. The sequence is that of Protein WFDC10B (WFDC10B) from Homo sapiens (Human).